The following is a 192-amino-acid chain: Ion-translocating oxidoreductase complex subunit B (192 aa).

A hydrophobic region spans residues 1 to 26 (MNAIWIAVAAVSLLGLAFGAILGYAS). A 4Fe-4S domain is found at 32–91 (EDDPVVEKIDEILPQSQCGQCGYPGCRPYAEAISCNGEKINRCAPGGEAVMLKIAELLNV). [4Fe-4S] cluster contacts are provided by cysteine 49, cysteine 52, cysteine 57, cysteine 74, cysteine 117, cysteine 120, cysteine 123, cysteine 127, cysteine 147, cysteine 150, cysteine 153, and cysteine 157. 4Fe-4S ferredoxin-type domains are found at residues 108–137 (MVAVIDENNCIGCTKCIQACPVDAIVGATR) and 138–167 (AMHTVMSDLCTGCNLCVDPCPTHCISLQPV).

The protein belongs to the 4Fe4S bacterial-type ferredoxin family. RnfB subfamily. The complex is composed of six subunits: RsxA, RsxB, RsxC, RsxD, RsxE and RsxG. It depends on [4Fe-4S] cluster as a cofactor.

Its subcellular location is the cell inner membrane. Functionally, part of a membrane-bound complex that couples electron transfer with translocation of ions across the membrane. Required to maintain the reduced state of SoxR. The protein is Ion-translocating oxidoreductase complex subunit B of Escherichia coli O8 (strain IAI1).